We begin with the raw amino-acid sequence, 338 residues long: Ketol-acid reductoisomerase (NADP(+)) (338 aa).

The 181-residue stretch at Met1–Thr181 folds into the KARI N-terminal Rossmann domain. Residues Tyr24–Gln27, Arg47, and Ser52 contribute to the NADP(+) site. His107 is an active-site residue. Gly133 provides a ligand contact to NADP(+). The KARI C-terminal knotted domain occupies Asn182–Ile327. Residues Asp190, Glu194, Glu226, and Glu230 each contribute to the Mg(2+) site. Residue Ser251 coordinates substrate.

It belongs to the ketol-acid reductoisomerase family. Requires Mg(2+) as cofactor.

It carries out the reaction (2R)-2,3-dihydroxy-3-methylbutanoate + NADP(+) = (2S)-2-acetolactate + NADPH + H(+). It catalyses the reaction (2R,3R)-2,3-dihydroxy-3-methylpentanoate + NADP(+) = (S)-2-ethyl-2-hydroxy-3-oxobutanoate + NADPH + H(+). It participates in amino-acid biosynthesis; L-isoleucine biosynthesis; L-isoleucine from 2-oxobutanoate: step 2/4. It functions in the pathway amino-acid biosynthesis; L-valine biosynthesis; L-valine from pyruvate: step 2/4. In terms of biological role, involved in the biosynthesis of branched-chain amino acids (BCAA). Catalyzes an alkyl-migration followed by a ketol-acid reduction of (S)-2-acetolactate (S2AL) to yield (R)-2,3-dihydroxy-isovalerate. In the isomerase reaction, S2AL is rearranged via a Mg-dependent methyl migration to produce 3-hydroxy-3-methyl-2-ketobutyrate (HMKB). In the reductase reaction, this 2-ketoacid undergoes a metal-dependent reduction by NADPH to yield (R)-2,3-dihydroxy-isovalerate. The polypeptide is Ketol-acid reductoisomerase (NADP(+)) (Burkholderia cenocepacia (strain ATCC BAA-245 / DSM 16553 / LMG 16656 / NCTC 13227 / J2315 / CF5610) (Burkholderia cepacia (strain J2315))).